The primary structure comprises 506 residues: UDP-N-acetylglucosamine--peptide N-acetylglucosaminyltransferase GtfA subunit (506 aa).

16–19 (GVEY) is a binding site for UDP. Residue His-241 coordinates N-acetyl-D-glucosamine. 384 to 385 (HK) lines the UDP pocket. 404–407 (EGFG) lines the N-acetyl-D-glucosamine pocket.

Belongs to the glycosyltransferase group 1 family. Glycosyltransferase 4 subfamily. In terms of assembly, interacts with stabilizing protein GtfB (Gtf2), probably as a heterotetramer with 2 subunits each of GtfA and GtfB, part of the accessory SecA2/SecY2 protein translocation apparatus.

It is found in the cytoplasm. The protein localises to the cell membrane. It carries out the reaction L-seryl-[protein] + UDP-N-acetyl-alpha-D-glucosamine = 3-O-[N-acetyl-alpha-D-glucosaminyl]-L-seryl-[protein] + UDP + H(+). Its pathway is protein modification; protein glycosylation. Its function is as follows. Required for polymorphic O-glycosylation of the serine-rich repeat protein Srr2. Catalyzes the first step in glycosylation by transferring N-acetylglucosamine from UDP-GlcNAc to serine residues of Srr2. Part of the accessory SecA2/SecY2 system specifically required to export serine-rich repeat proteins, probably Srr2 in this organism. The GtfA-GtfB (Gtf1-Gtf2 in this bacteria) complex adds GlcNAc from UDP-GlcNAc to Srr2 substrate. This subunit has low glycosyltransferase activity; GtfB enhances glycosyltransferase activity in vitro. Upon expression in S.parasanguis GtfA/GtfB restores expression of serine-rich repeat protein Fap1 and complements a biofilm formation defect. The sequence is that of UDP-N-acetylglucosamine--peptide N-acetylglucosaminyltransferase GtfA subunit from Streptococcus agalactiae.